The following is a 366-amino-acid chain: Beta sliding clamp (366 aa).

The protein belongs to the beta sliding clamp family. As to quaternary structure, forms a ring-shaped head-to-tail homodimer around DNA which binds and tethers DNA polymerases and other proteins to the DNA. The DNA replisome complex has a single clamp-loading complex (3 tau and 1 each of delta, delta', psi and chi subunits) which binds 3 Pol III cores (1 core on the leading strand and 2 on the lagging strand) each with a beta sliding clamp dimer. Additional proteins in the replisome are other copies of gamma, psi and chi, Ssb, DNA helicase and RNA primase.

It localises to the cytoplasm. Its function is as follows. Confers DNA tethering and processivity to DNA polymerases and other proteins. Acts as a clamp, forming a ring around DNA (a reaction catalyzed by the clamp-loading complex) which diffuses in an ATP-independent manner freely and bidirectionally along dsDNA. Initially characterized for its ability to contact the catalytic subunit of DNA polymerase III (Pol III), a complex, multichain enzyme responsible for most of the replicative synthesis in bacteria; Pol III exhibits 3'-5' exonuclease proofreading activity. The beta chain is required for initiation of replication as well as for processivity of DNA replication. This Buchnera aphidicola subsp. Rhopalosiphum padi protein is Beta sliding clamp (dnaN).